Here is a 215-residue protein sequence, read N- to C-terminus: Autophagy-related protein 101 (215 aa).

The segment at 124 to 147 (PVGKSHHSKLVMDPGEASEERSSR) is disordered.

Belongs to the ATG101 family. Interacts with ATG11 and ATG13A.

It localises to the cytoplasmic vesicle. Its subcellular location is the autophagosome. Accessory protein involved in autophagy. Acts as a scaffold protein of the ATG1-ATG13 complex for faithful delivery of autophagic vesicles to the vacuole. Required for selective mitophagy. The chain is Autophagy-related protein 101 from Arabidopsis thaliana (Mouse-ear cress).